We begin with the raw amino-acid sequence, 301 residues long: Probable aspartoacylase (301 aa).

Zn(2+)-binding residues include His-13 and Glu-16. Residues Arg-54 and 61–62 each bind substrate; that span reads NR. Zn(2+) is bound at residue His-105. Substrate is bound by residues Glu-163 and Tyr-273.

Belongs to the AspA/AstE family. Aspartoacylase subfamily. Zn(2+) serves as cofactor.

It catalyses the reaction an N-acyl-L-aspartate + H2O = a carboxylate + L-aspartate. This chain is Probable aspartoacylase, found in Prochlorococcus marinus (strain MIT 9301).